A 119-amino-acid chain; its full sequence is Large ribosomal subunit protein bL20 (119 aa).

The protein belongs to the bacterial ribosomal protein bL20 family.

Its function is as follows. Binds directly to 23S ribosomal RNA and is necessary for the in vitro assembly process of the 50S ribosomal subunit. It is not involved in the protein synthesizing functions of that subunit. In Acidovorax ebreus (strain TPSY) (Diaphorobacter sp. (strain TPSY)), this protein is Large ribosomal subunit protein bL20.